Here is a 1370-residue protein sequence, read N- to C-terminus: DNA-directed RNA polymerase subunit beta (1370 aa).

The protein belongs to the RNA polymerase beta chain family. The RNAP catalytic core consists of 2 alpha, 1 beta, 1 beta' and 1 omega subunit. When a sigma factor is associated with the core the holoenzyme is formed, which can initiate transcription.

The catalysed reaction is RNA(n) + a ribonucleoside 5'-triphosphate = RNA(n+1) + diphosphate. In terms of biological role, DNA-dependent RNA polymerase catalyzes the transcription of DNA into RNA using the four ribonucleoside triphosphates as substrates. This chain is DNA-directed RNA polymerase subunit beta, found in Syntrophobacter fumaroxidans (strain DSM 10017 / MPOB).